The primary structure comprises 269 residues: Hydroxyethylthiazole kinase (269 aa).

Met46 contacts substrate. ATP is bound by residues Arg122 and Thr168. Substrate is bound at residue Gly195.

This sequence belongs to the Thz kinase family. Requires Mg(2+) as cofactor.

The enzyme catalyses 5-(2-hydroxyethyl)-4-methylthiazole + ATP = 4-methyl-5-(2-phosphooxyethyl)-thiazole + ADP + H(+). Its pathway is cofactor biosynthesis; thiamine diphosphate biosynthesis; 4-methyl-5-(2-phosphoethyl)-thiazole from 5-(2-hydroxyethyl)-4-methylthiazole: step 1/1. Its function is as follows. Catalyzes the phosphorylation of the hydroxyl group of 4-methyl-5-beta-hydroxyethylthiazole (THZ). The chain is Hydroxyethylthiazole kinase from Geobacillus thermodenitrificans (strain NG80-2).